The following is a 249-amino-acid chain: NAD(P)H-quinone oxidoreductase subunit K 2 (249 aa).

Residues Cys54, Cys55, Cys119, and Cys150 each contribute to the [4Fe-4S] cluster site.

Belongs to the complex I 20 kDa subunit family. In terms of assembly, NDH-1 can be composed of about 15 different subunits; different subcomplexes with different compositions have been identified which probably have different functions. [4Fe-4S] cluster is required as a cofactor.

The protein resides in the cell inner membrane. It catalyses the reaction a plastoquinone + NADH + (n+1) H(+)(in) = a plastoquinol + NAD(+) + n H(+)(out). It carries out the reaction a plastoquinone + NADPH + (n+1) H(+)(in) = a plastoquinol + NADP(+) + n H(+)(out). NDH-1 shuttles electrons from an unknown electron donor, via FMN and iron-sulfur (Fe-S) centers, to quinones in the respiratory and/or the photosynthetic chain. The immediate electron acceptor for the enzyme in this species is believed to be plastoquinone. Couples the redox reaction to proton translocation, and thus conserves the redox energy in a proton gradient. Cyanobacterial NDH-1 also plays a role in inorganic carbon-concentration. The chain is NAD(P)H-quinone oxidoreductase subunit K 2 from Gloeobacter violaceus (strain ATCC 29082 / PCC 7421).